Consider the following 207-residue polypeptide: Protein lin-7 homolog B (207 aa).

The Kinase interacting site signature appears at 1–13 (MAALVEPLGLERD). Residues 10–65 (LERDVSRAVELLERLQRSGELPPQKLQALQRVLQSRFCSAIREVYEQLYDTLDITG) enclose the L27 domain. The PDZ domain maps to 93–175 (VVELPKTDEG…SVKLVVRYTP (83 aa)). Residues 187–207 (KMRSARRRQQHQSYSSLESRG) form a disordered region. Polar residues predominate over residues 197–207 (HQSYSSLESRG).

It belongs to the lin-7 family. As to quaternary structure, forms a complex with CASK and CASKIN1. Component of the brain-specific heterotrimeric complex (LIN-10-LIN-2-LIN-7 complex) composed of at least APBA1, CASK, and LIN7, which associates with the motor protein KIF17 to transport vesicles along microtubules. Forms a heterotrimeric complex composed of MMP5, LIN7B and PATJ; the N-terminal L27 domain of PALS1 interacts with the L27 domain of PATJ and the C-terminal L27 domain of PALS1 interacts with the L27 domain of LIN7B. Forms a heterotrimeric complex with DLG1 and CASK via their L27 domains. Interacts with DLG4 and GRIN2B as well as CDH1 and CTNNB1, the channels KCNJ12/Kir2.2, KCNJ4/Kir2.3 and probably KCNJ2/Kir2.1 and SLC6A12/BGT-1 via its PDZ domain. The association of LIN7A with cadherin and beta-catenin is calcium-dependent, occurs at synaptic junctions and requires the actin cytoskeleton. Interacts with EGFR, ERBB2, ERBB3 and ERBB4 with both PDZ and KID domains. Associates with KIF17 via APBA1. Interacts with ASIC3. Interacts with TOPK. Interacts with RTKN. Interacts with APBA1. Interacts with MPP7. Interacts with DLG2. Interacts with DLG3.

It is found in the cell membrane. The protein localises to the basolateral cell membrane. Its subcellular location is the cell junction. The protein resides in the postsynaptic density membrane. It localises to the tight junction. Plays a role in establishing and maintaining the asymmetric distribution of channels and receptors at the plasma membrane of polarized cells. Forms membrane-associated multiprotein complexes that may regulate delivery and recycling of proteins to the correct membrane domains. The tripartite complex composed of LIN7 (LIN7A, LIN7B or LIN7C), CASK and APBA1 associates with the motor protein KIF17 to transport vesicles containing N-methyl-D-aspartate (NMDA) receptor subunit NR2B along microtubules. This complex may have the potential to couple synaptic vesicle exocytosis to cell adhesion in brain. Ensures the proper localization of GRIN2B (subunit 2B of the NMDA receptor) to neuronal postsynaptic density and may function in localizing synaptic vesicles at synapses where it is recruited by beta-catenin and cadherin. Required to localize Kir2 channels, GABA transporter (SLC6A12) and EGFR/ERBB1, ERBB2, ERBB3 and ERBB4 to the basolateral membrane of epithelial cells. May increase the amplitude of ASIC3 acid-evoked currents by stabilizing the channel at the cell surface. This chain is Protein lin-7 homolog B (LIN7B), found in Homo sapiens (Human).